The sequence spans 212 residues: Ribosomal RNA small subunit methyltransferase G (212 aa).

S-adenosyl-L-methionine-binding positions include glycine 80, leucine 85, 131-132 (AE), and arginine 146.

It belongs to the methyltransferase superfamily. RNA methyltransferase RsmG family.

It is found in the cytoplasm. The enzyme catalyses guanosine(527) in 16S rRNA + S-adenosyl-L-methionine = N(7)-methylguanosine(527) in 16S rRNA + S-adenosyl-L-homocysteine. Functionally, specifically methylates the N7 position of guanine in position 527 of 16S rRNA. This chain is Ribosomal RNA small subunit methyltransferase G, found in Xanthomonas oryzae pv. oryzae (strain KACC10331 / KXO85).